A 486-amino-acid chain; its full sequence is Ribulose bisphosphate carboxylase large chain 3 (486 aa).

Residues Asn-125 and Thr-175 each contribute to the substrate site. Lys-177 acts as the Proton acceptor in catalysis. Lys-179 is a substrate binding site. Residues Lys-203, Asp-205, and Glu-206 each contribute to the Mg(2+) site. An N6-carboxylysine modification is found at Lys-203. His-295 (proton acceptor) is an active-site residue. Residues Arg-296, His-328, and Ser-380 each coordinate substrate.

The protein belongs to the RuBisCO large chain family. Type I subfamily. As to quaternary structure, heterohexadecamer of 8 large chains and 8 small chains. It depends on Mg(2+) as a cofactor.

The enzyme catalyses 2 (2R)-3-phosphoglycerate + 2 H(+) = D-ribulose 1,5-bisphosphate + CO2 + H2O. It catalyses the reaction D-ribulose 1,5-bisphosphate + O2 = 2-phosphoglycolate + (2R)-3-phosphoglycerate + 2 H(+). RuBisCO catalyzes two reactions: the carboxylation of D-ribulose 1,5-bisphosphate, the primary event in carbon dioxide fixation, as well as the oxidative fragmentation of the pentose substrate. Both reactions occur simultaneously and in competition at the same active site. In Bradyrhizobium sp. (strain BTAi1 / ATCC BAA-1182), this protein is Ribulose bisphosphate carboxylase large chain 3.